Here is a 364-residue protein sequence, read N- to C-terminus: Coproporphyrin III ferrochelatase (364 aa).

Positions 29 and 118 each coordinate Fe-coproporphyrin III. H169 and E250 together coordinate Fe(2+).

Belongs to the ferrochelatase family.

The protein resides in the cytoplasm. The catalysed reaction is Fe-coproporphyrin III + 2 H(+) = coproporphyrin III + Fe(2+). It participates in porphyrin-containing compound metabolism; protoheme biosynthesis. Involved in coproporphyrin-dependent heme b biosynthesis. Catalyzes the insertion of ferrous iron into coproporphyrin III to form Fe-coproporphyrin III. The sequence is that of Coproporphyrin III ferrochelatase from Streptococcus pneumoniae (strain 70585).